Consider the following 275-residue polypeptide: Phosphate import ATP-binding protein PstB (275 aa).

The region spanning 28 to 270 is the ABC transporter domain; that stretch reads MSAKNVSVFY…PREERTKDYI (243 aa). 60–67 contributes to the ATP binding site; it reads GPSGCGKS.

It belongs to the ABC transporter superfamily. Phosphate importer (TC 3.A.1.7) family. In terms of assembly, the complex is composed of two ATP-binding proteins (PstB), two transmembrane proteins (PstC and PstA) and a solute-binding protein (PstS).

It localises to the cell inner membrane. The enzyme catalyses phosphate(out) + ATP + H2O = ADP + 2 phosphate(in) + H(+). In terms of biological role, part of the ABC transporter complex PstSACB involved in phosphate import. Responsible for energy coupling to the transport system. The chain is Phosphate import ATP-binding protein PstB from Novosphingobium aromaticivorans (strain ATCC 700278 / DSM 12444 / CCUG 56034 / CIP 105152 / NBRC 16084 / F199).